We begin with the raw amino-acid sequence, 360 residues long: UDP-3-O-acylglucosamine N-acyltransferase (360 aa).

The active-site Proton acceptor is His253.

Belongs to the transferase hexapeptide repeat family. LpxD subfamily. As to quaternary structure, homotrimer.

It catalyses the reaction a UDP-3-O-[(3R)-3-hydroxyacyl]-alpha-D-glucosamine + a (3R)-hydroxyacyl-[ACP] = a UDP-2-N,3-O-bis[(3R)-3-hydroxyacyl]-alpha-D-glucosamine + holo-[ACP] + H(+). It participates in bacterial outer membrane biogenesis; LPS lipid A biosynthesis. Its function is as follows. Catalyzes the N-acylation of UDP-3-O-acylglucosamine using 3-hydroxyacyl-ACP as the acyl donor. Is involved in the biosynthesis of lipid A, a phosphorylated glycolipid that anchors the lipopolysaccharide to the outer membrane of the cell. The polypeptide is UDP-3-O-acylglucosamine N-acyltransferase (Burkholderia multivorans (strain ATCC 17616 / 249)).